The sequence spans 251 residues: Glucosamine-6-phosphate deaminase (251 aa).

The Proton acceptor; for enolization step role is filled by Asp-73. The For ring-opening step role is filled by Asn-142. His-144 serves as the catalytic Proton acceptor; for ring-opening step. The active-site For ring-opening step is the Glu-149.

The protein belongs to the glucosamine/galactosamine-6-phosphate isomerase family. NagB subfamily.

It catalyses the reaction alpha-D-glucosamine 6-phosphate + H2O = beta-D-fructose 6-phosphate + NH4(+). It participates in amino-sugar metabolism; N-acetylneuraminate degradation; D-fructose 6-phosphate from N-acetylneuraminate: step 5/5. Its function is as follows. Catalyzes the reversible isomerization-deamination of glucosamine 6-phosphate (GlcN6P) to form fructose 6-phosphate (Fru6P) and ammonium ion. The protein is Glucosamine-6-phosphate deaminase of Rhodopirellula baltica (strain DSM 10527 / NCIMB 13988 / SH1).